A 199-amino-acid polypeptide reads, in one-letter code: NAD(P)H dehydrogenase (quinone) (199 aa).

The Flavodoxin-like domain occupies 4–190 (VLVLYYSAYG…AGARYQGRVI (187 aa)). FMN is bound by residues 10-15 (SAYGHI) and 78-80 (TRF). Tyr12 serves as a coordination point for NAD(+). Trp98 provides a ligand contact to substrate. FMN is bound by residues 113–119 (STATQHG) and His134.

This sequence belongs to the WrbA family. The cofactor is FMN.

It carries out the reaction a quinone + NADH + H(+) = a quinol + NAD(+). The enzyme catalyses a quinone + NADPH + H(+) = a quinol + NADP(+). This chain is NAD(P)H dehydrogenase (quinone), found in Bradyrhizobium sp. (strain ORS 278).